A 306-amino-acid chain; its full sequence is Methionyl-tRNA formyltransferase (306 aa).

Position 110 to 113 (110 to 113 (SLLP)) interacts with (6S)-5,6,7,8-tetrahydrofolate.

It belongs to the Fmt family.

The enzyme catalyses L-methionyl-tRNA(fMet) + (6R)-10-formyltetrahydrofolate = N-formyl-L-methionyl-tRNA(fMet) + (6S)-5,6,7,8-tetrahydrofolate + H(+). Its function is as follows. Attaches a formyl group to the free amino group of methionyl-tRNA(fMet). The formyl group appears to play a dual role in the initiator identity of N-formylmethionyl-tRNA by promoting its recognition by IF2 and preventing the misappropriation of this tRNA by the elongation apparatus. This Brucella melitensis biotype 2 (strain ATCC 23457) protein is Methionyl-tRNA formyltransferase.